Consider the following 230-residue polypeptide: Carbohydrate deacetylase (230 aa).

Positions 59 and 123 each coordinate Mg(2+).

The protein belongs to the YdjC deacetylase family. As to quaternary structure, homodimer. The cofactor is Mg(2+).

In terms of biological role, probably catalyzes the deacetylation of acetylated carbohydrates an important step in the degradation of oligosaccharides. This chain is Carbohydrate deacetylase, found in Oceanobacillus iheyensis (strain DSM 14371 / CIP 107618 / JCM 11309 / KCTC 3954 / HTE831).